We begin with the raw amino-acid sequence, 1521 residues long: Suppressor of Ty 6 homolog (1521 aa).

Positions 1–204 are disordered; that stretch reads MDFIDNQAEE…EGAEDDARDV (204 aa). Residues 26–41 show a composition bias toward basic residues; it reads KKMKMAKDKLKKKKKV. The Nuclear localization signal signature appears at 26–42; it reads KKMKMAKDKLKKKKKVV. Composition is skewed to acidic residues over residues 45-56 and 67-76; these read SDEDEDDEDDEE and ADEDDEEEDA. Basic and acidic residues predominate over residues 77–89; it reads RSEKSDRSRRSEI. Positions 90-103 are enriched in acidic residues; it reads NDELDDEDLDLIDE. Basic and acidic residues predominate over residues 127–149; sequence PIRRSNQDDDDLQSERGSDDGDK. The span at 167 to 177 shows a compositional bias: acidic residues; it reads RSEDDFIEDDG. Positions 1182 to 1251 constitute an S1 motif domain; it reads LNAGRPGGCV…EKFSILLSCK (70 aa). An SH2 domain is found at 1299–1388; the sequence is HPNFHNVSYE…IARFVLPMIQ (90 aa). Residues 1490–1521 are disordered; sequence GIRSSLSYRPTGRTGPPPSAPYQQPPQQQYYR. Residues 1504–1513 show a composition bias toward pro residues; it reads GPPPSAPYQQ.

Belongs to the SPT6 family. In terms of assembly, interacts with glp-1 and lin-12.

The protein localises to the nucleus. Functionally, histone H3-H4 chaperone that plays a role in maintenance of chromatin structure during RNA polymerase II transcription elongation. May be required for several aspects of morphogenesis of C.briggsae, including regulation of division in the germline and gut and specification of ventral-uterine precursor cell fate. The polypeptide is Suppressor of Ty 6 homolog (emb-5) (Caenorhabditis briggsae).